A 219-amino-acid polypeptide reads, in one-letter code: Flagellar L-ring protein (219 aa).

An N-terminal signal peptide occupies residues 1–14; it reads MKRLVLISLVLAAG. Cys15 carries N-palmitoyl cysteine lipidation. Residue Cys15 is the site of S-diacylglycerol cysteine attachment.

It belongs to the FlgH family. As to quaternary structure, the basal body constitutes a major portion of the flagellar organelle and consists of four rings (L,P,S, and M) mounted on a central rod.

The protein resides in the cell outer membrane. The protein localises to the bacterial flagellum basal body. Functionally, assembles around the rod to form the L-ring and probably protects the motor/basal body from shearing forces during rotation. The chain is Flagellar L-ring protein from Dechloromonas aromatica (strain RCB).